The chain runs to 380 residues: SAM and SH3 domain-containing protein 3 (380 aa).

Disordered regions lie at residues 1–76 (MLRR…GKKW) and 96–168 (LSEE…SPAP). Low complexity predominate over residues 22 to 41 (LQRSSSFKDFAKSKPSSPVV). Phosphoserine is present on residues serine 27, serine 34, and serine 42. The residue at position 61 (threonine 61) is a Phosphothreonine. Serine 97 carries the post-translational modification Phosphoserine. Threonine 103 bears the Phosphothreonine mark. Position 110 is a phosphoserine (serine 110). Threonine 112 carries the phosphothreonine modification. A phosphoserine mark is found at serine 113 and serine 120. The span at 141–150 (LSRQTSTGSE) shows a compositional bias: polar residues. An SH3 domain is found at 173 to 234 (PFCGRARVHT…KFIYVDVLPE (62 aa)). One can recognise an SAM domain in the interval 252–316 (PKPKTLHELL…LTAAELLLDY (65 aa)). Threonine 318 carries the post-translational modification Phosphothreonine. Positions 318–327 (TGSEEAEEGA) are enriched in acidic residues. The tract at residues 318–380 (TGSEEAEEGA…LQGLSLSGAP (63 aa)) is disordered. Serine 320 carries the phosphoserine modification. The segment covering 369–380 (EQLQGLSLSGAP) has biased composition (polar residues).

Preferentially expressed in lymphoid tissues. Expressed in bone marrow, thymus, spleen, lymph nodes and Peyer patches of gut. In the spleen and lymph nodes, expressed in both T- and B-cells. In the thymus, in the medulla and cortex.

May function as a signaling adapter protein in lymphocytes. This Mus musculus (Mouse) protein is SAM and SH3 domain-containing protein 3 (Sash3).